The sequence spans 93 residues: Small ribosomal subunit protein bS18 (93 aa).

This sequence belongs to the bacterial ribosomal protein bS18 family. As to quaternary structure, part of the 30S ribosomal subunit. Forms a tight heterodimer with protein bS6.

In terms of biological role, binds as a heterodimer with protein bS6 to the central domain of the 16S rRNA, where it helps stabilize the platform of the 30S subunit. This is Small ribosomal subunit protein bS18 from Variovorax paradoxus (strain S110).